The sequence spans 399 residues: Elongation factor Tu (399 aa).

The tr-type G domain maps to 10-209 (NPHVNIGTIG…EVDSYIPTPE (200 aa)). The interval 19–26 (GHVYHGKT) is G1. 19–26 (GHVYHGKT) contacts GTP. Mg(2+) is bound at residue T26. A G2 region spans residues 60 to 64 (GITIA). The interval 81–84 (DCPG) is G3. Residues 81–85 (DCPGH) and 136–139 (NKQD) contribute to the GTP site. The tract at residues 136-139 (NKQD) is G4. The interval 174-176 (SAL) is G5.

This sequence belongs to the TRAFAC class translation factor GTPase superfamily. Classic translation factor GTPase family. EF-Tu/EF-1A subfamily. In terms of assembly, monomer.

Its subcellular location is the cytoplasm. The enzyme catalyses GTP + H2O = GDP + phosphate + H(+). GTP hydrolase that promotes the GTP-dependent binding of aminoacyl-tRNA to the A-site of ribosomes during protein biosynthesis. The sequence is that of Elongation factor Tu from Helicobacter pylori (strain J99 / ATCC 700824) (Campylobacter pylori J99).